The chain runs to 470 residues: Crh-like protein UTR2 (470 aa).

The signal sequence occupies residues 1–23 (MRFSTLHFAFLATLSSIFTVVAA). The cysteines at positions 58 and 69 are disulfide-linked. N-linked (GlcNAc...) asparagine glycans are attached at residues N65, N100, and N125. Residues 95–282 (SDYLGNSTEA…WAGGLINWDS (188 aa)) form the GH16 domain. Catalysis depends on E168, which acts as the Nucleophile. E172 (proton donor) is an active-site residue. Residue E172 participates in chitin binding. N-linked (GlcNAc...) asparagine glycosylation is found at N177, N194, N198, N202, N235, and N239. Chitin-binding residues include W259 and T270. N314 and N327 each carry an N-linked (GlcNAc...) asparagine glycan. The interval 347–446 (SDDATGFDPQ…SSGSSSQGVA (100 aa)) is disordered. Low complexity-rich tracts occupy residues 370–384 (TTIT…ITSV) and 392–408 (TANV…QATA). Positions 409–418 (KSSTGTNTYD) are enriched in polar residues. Over residues 433–446 (TDSGSSGSSSQGVA) the composition is skewed to low complexity. S440 carries GPI-anchor amidated serine lipidation. A propeptide spans 441–470 (SSQGVANSLNESVISGIFASICLGILSFFM) (removed in mature form). An N-linked (GlcNAc...) asparagine glycan is attached at N450.

It belongs to the glycosyl hydrolase 16 family. CRH1 subfamily. The GPI-anchor is attached to the protein in the endoplasmic reticulum and serves to target the protein to the cell surface. There, the glucosamine-inositol phospholipid moiety is cleaved off and the GPI-modified mannoprotein is covalently attached via its lipidless GPI glycan remnant to the 1,6-beta-glucan of the outer cell wall layer.

Its subcellular location is the secreted. It is found in the cell wall. It localises to the membrane. The enzyme catalyses Random endo-hydrolysis of N-acetyl-beta-D-glucosaminide (1-&gt;4)-beta-linkages in chitin and chitodextrins.. In terms of biological role, dual chitinase/transglycosylase that plays a role in cell wall architecture. Chitinase and transglycosylase activities are coupled. Required for the polysaccharide cross-linking at the septa and the cell wall. More specifically, transfers chitin to 1,6-beta-glucan in the cell wall. Plays an important role in fungal pathogenesis via its functions in cell wall assembly and regeneration, filamentation, and adherence to host cells. Acts as a cell surface antigen in acute candidemia patients. This is Crh-like protein UTR2 from Candida albicans (strain SC5314 / ATCC MYA-2876) (Yeast).